A 105-amino-acid chain; its full sequence is Nitrogenase-stabilizing/protective protein NifW (105 aa).

The protein belongs to the NifW family. Homotrimer; associates with NifD.

In terms of biological role, may protect the nitrogenase Fe-Mo protein from oxidative damage. The protein is Nitrogenase-stabilizing/protective protein NifW of Nostoc punctiforme (strain ATCC 29133 / PCC 73102).